A 467-amino-acid polypeptide reads, in one-letter code: UDP-N-acetylmuramate--L-alanine ligase (467 aa).

An ATP-binding site is contributed by G114–T120.

It belongs to the MurCDEF family.

The protein localises to the cytoplasm. It catalyses the reaction UDP-N-acetyl-alpha-D-muramate + L-alanine + ATP = UDP-N-acetyl-alpha-D-muramoyl-L-alanine + ADP + phosphate + H(+). Its pathway is cell wall biogenesis; peptidoglycan biosynthesis. Its function is as follows. Cell wall formation. The protein is UDP-N-acetylmuramate--L-alanine ligase of Rhodopseudomonas palustris (strain BisB18).